Consider the following 651-residue polypeptide: Probable potassium transport system protein Kup (651 aa).

Residues 1-16 are compositionally biased toward basic and acidic residues; the sequence is MRDSPGSKSSSERWHD. Residues 1–31 form a disordered region; the sequence is MRDSPGSKSSSERWHDTMAVSDPTAEGKDES. 12 helical membrane-spanning segments follow: residues 38–58, 74–94, 129–149, 168–188, 197–217, 232–252, 276–296, 309–329, 366–386, 396–416, 423–443, and 448–468; these read FWAL…TSPL, VTPA…FIVV, LLLL…SMIT, LQDY…AVQS, AFAP…VLHI, AIHF…LVFL, WFCL…ALIL, LAPA…TVIA, IYLP…VLLF, YGIA…VVVW, PAAA…FFSA, and LFDG…LIWT.

This sequence belongs to the HAK/KUP transporter (TC 2.A.72) family.

It is found in the cell inner membrane. It catalyses the reaction K(+)(in) + H(+)(in) = K(+)(out) + H(+)(out). Functionally, transport of potassium into the cell. Likely operates as a K(+):H(+) symporter. This is Probable potassium transport system protein Kup from Nitrobacter winogradskyi (strain ATCC 25391 / DSM 10237 / CIP 104748 / NCIMB 11846 / Nb-255).